The chain runs to 227 residues: Phosphoribosylformylglycinamidine synthase subunit PurQ (227 aa).

The 223-residue stretch at 3–225 folds into the Glutamine amidotransferase type-1 domain; it reads FAVIVLPGSN…VKNWRETHVT (223 aa). The active-site Nucleophile is Cys-86. Active-site residues include His-194 and Glu-196.

As to quaternary structure, part of the FGAM synthase complex composed of 1 PurL, 1 PurQ and 2 PurS subunits.

Its subcellular location is the cytoplasm. The enzyme catalyses N(2)-formyl-N(1)-(5-phospho-beta-D-ribosyl)glycinamide + L-glutamine + ATP + H2O = 2-formamido-N(1)-(5-O-phospho-beta-D-ribosyl)acetamidine + L-glutamate + ADP + phosphate + H(+). It carries out the reaction L-glutamine + H2O = L-glutamate + NH4(+). Its pathway is purine metabolism; IMP biosynthesis via de novo pathway; 5-amino-1-(5-phospho-D-ribosyl)imidazole from N(2)-formyl-N(1)-(5-phospho-D-ribosyl)glycinamide: step 1/2. Part of the phosphoribosylformylglycinamidine synthase complex involved in the purines biosynthetic pathway. Catalyzes the ATP-dependent conversion of formylglycinamide ribonucleotide (FGAR) and glutamine to yield formylglycinamidine ribonucleotide (FGAM) and glutamate. The FGAM synthase complex is composed of three subunits. PurQ produces an ammonia molecule by converting glutamine to glutamate. PurL transfers the ammonia molecule to FGAR to form FGAM in an ATP-dependent manner. PurS interacts with PurQ and PurL and is thought to assist in the transfer of the ammonia molecule from PurQ to PurL. In Bacillus subtilis (strain 168), this protein is Phosphoribosylformylglycinamidine synthase subunit PurQ.